The sequence spans 73 residues: MKLQFLFIFIAFCVMLFAQIATAKPVEAEVAQSNLDECEVEAEVAQPKLYQRGEGGNGMEPIPEDVLNEALNA.

An N-terminal signal peptide occupies residues 1 to 23; that stretch reads MKLQFLFIFIAFCVMLFAQIATA.

In terms of assembly, interacts with human F2 (thrombin). As to expression, salivary gland (at protein level).

It localises to the secreted. Acts as a competitive inhibitor of host thrombin. The polypeptide is Salivary thrombin inhibitor XC-42 (Xenopsylla cheopis (Oriental rat flea)).